The following is a 333-amino-acid chain: MTSKSHWKLLALALVLVVVMVWYSISREDRYIEFFYFPVSEKKEPCFQGEAERQASKIFGNHSREQPIFLQLKDYFWVKTPSAYELPFGTKGSEDLLLRVLAITSYSIPESIQSLECRRCVVVGNGHRLKNSSLGGVINKYDVVIRLNNAPVAGYEGDVGSKTTIRLFYPESAHFDPKIENNPDTLLVLVAFKAMDFHWIETILSDKKRVRKGFWKQPPLIWDVNPKQIRILNPFFMEIAADKLLSLPIQQPRKIKQKPTTGLLAITLALHLCDLVHIAGFGYPDAYNKKQTIHYYEQITLKSMAGSGHNVSQEAVAIKRMLEMGAVKNLTYF.

Topologically, residues 1 to 8 are cytoplasmic; sequence MTSKSHWK. The chain crosses the membrane as a helical; Signal-anchor for type II membrane protein span at residues 9–26; sequence LLALALVLVVVMVWYSIS. Residues 27–333 lie on the Lumenal side of the membrane; it reads REDRYIEFFY…MGAVKNLTYF (307 aa). Residues Asn61, Asn131, Asn310, and Asn329 are each glycosylated (N-linked (GlcNAc...) asparagine). Cysteines 120 and 273 form a disulfide.

This sequence belongs to the glycosyltransferase 29 family.

It localises to the golgi apparatus. It is found in the golgi stack membrane. The catalysed reaction is a beta-D-galactosyl-(1-&gt;3)-N-acetyl-beta-D-galactosaminyl derivative + CMP-N-acetyl-beta-neuraminate = an N-acetyl-alpha-neuraminyl-(2-&gt;3)-beta-D-galactosyl-(1-&gt;3)-N-acetyl-beta-D-galactosaminyl derivative + CMP + H(+). It carries out the reaction a beta-D-galactosyl-(1-&gt;3)-N-acetyl-alpha-D-galactosaminyl derivative + CMP-N-acetyl-beta-neuraminate = an N-acetyl-alpha-neuraminyl-(2-&gt;3)-beta-D-galactosyl-(1-&gt;3)-N-acetyl-alpha-D-galactosaminyl derivative + CMP + H(+). It catalyses the reaction a beta-D-galactosyl-(1-&gt;4)-N-acetyl-beta-D-glucosaminyl derivative + CMP-N-acetyl-beta-neuraminate = an N-acetyl-alpha-neuraminyl-(2-&gt;3)-beta-D-galactosyl-(1-&gt;4)-N-acetyl-beta-D-glucosaminyl derivative + CMP + H(+). The enzyme catalyses a ganglioside GM1 (d18:1(4E)) + CMP-N-acetyl-beta-neuraminate = a ganglioside GD1a (d18:1(4E)) + CMP + H(+). The catalysed reaction is a ganglioside GA1 (d18:1(4E)) + CMP-N-acetyl-beta-neuraminate = a ganglioside GM1b (d18:1(4E)) + CMP + H(+). It carries out the reaction a ganglioside GT1c (d18:1(4E)) + CMP-N-acetyl-beta-neuraminate = a ganglioside GQ1c (d18:1(4E)) + CMP + H(+). It catalyses the reaction a neolactoside nLc4Cer + CMP-N-acetyl-beta-neuraminate = a neolactoside IV(3)-alpha-NeuAc-nLc4Cer + CMP + H(+). The enzyme catalyses a neolactoside nLc4Cer(d18:1(4E)) + CMP-N-acetyl-beta-neuraminate = a neolactoside IV(3)-alpha-NeuAc-nLc4Cer(d18:1(4E)) + CMP + H(+). It participates in protein modification; protein glycosylation. The protein operates within glycolipid biosynthesis. Functionally, a beta-galactoside alpha2-3 sialyltransferase involved in terminal sialylation of glycoproteins and glycolipids. Catalyzes the transfer of sialic acid (N-acetyl-neuraminic acid; Neu5Ac) from the nucleotide sugar donor CMP-Neu5Ac onto acceptor Galbeta-(1-&gt;3)-GalNAc- and Galbeta-(1-&gt;4)-GlcNAc-terminated glycoconjugates through an alpha2-3 linkage. Plays a major role in hemostasis. Responsible for sialylation of plasma VWF/von Willebrand factor, preventing its recognition by asialoglycoprotein receptors (ASGPR) and subsequent clearance. Regulates ASGPR-mediated clearance of platelets. Participates in the biosynthesis of the sialyl Lewis X epitopes, both on O- and N-glycans, which are recognized by SELE/E-selectin, SELP/P-selectin and SELL/L-selectin. Essential for selectin-mediated rolling and adhesion of leukocytes during extravasation. Contributes to adhesion and transendothelial migration of neutrophils likely through terminal sialylation of CXCR2. In glycosphingolipid biosynthesis, sialylates GM1 and GA1 gangliosides to form GD1a and GM1b, respectively. Metabolizes brain c-series ganglioside GT1c forming GQ1c. Synthesizes ganglioside LM1 (IV3Neu5Ac-nLc4Cer), a major structural component of peripheral nerve myelin. The chain is CMP-N-acetylneuraminate-beta-galactosamide-alpha-2,3-sialyltransferase 4 (St3gal4) from Rattus norvegicus (Rat).